A 249-amino-acid polypeptide reads, in one-letter code: Electron transfer flavoprotein subunit beta (249 aa).

Belongs to the ETF beta-subunit/FixA family. Heterodimer of an alpha and a beta subunit. FAD is required as a cofactor. It depends on AMP as a cofactor.

Functionally, the electron transfer flavoprotein serves as a specific electron acceptor for other dehydrogenases. It transfers the electrons to the main respiratory chain via ETF-ubiquinone oxidoreductase (ETF dehydrogenase). The polypeptide is Electron transfer flavoprotein subunit beta (etfB) (Pseudomonas aeruginosa (strain ATCC 15692 / DSM 22644 / CIP 104116 / JCM 14847 / LMG 12228 / 1C / PRS 101 / PAO1)).